The primary structure comprises 169 residues: MATSSAVLFFLLAVFAAGASAATFRITNNCGFTVWPAGIPVGGGFQLNSKQSSNINVPAGTSAGRIWGRTGCSFNNGRGSCATGDCAGALSCTLSGQPATLAEYTIGGSQDFYDISVIDGYNLAMDFSCSTGVALKCRDANCPDAYHHPNDVATHACNGNSNYQITFCP.

An N-terminal signal peptide occupies residues 1 to 21; it reads MATSSAVLFFLLAVFAAGASA.

It belongs to the thaumatin family.

Functionally, associated with resistance against stem rust fungi. This Avena sativa (Oat) protein is Thaumatin-like pathogenesis-related protein 2 (RASTL-2).